The sequence spans 446 residues: ATP-dependent protease ATPase subunit HslU (446 aa).

ATP-binding positions include V18, 60-65, D259, E324, and R396; that span reads GVGKTE.

Belongs to the ClpX chaperone family. HslU subfamily. A double ring-shaped homohexamer of HslV is capped on each side by a ring-shaped HslU homohexamer. The assembly of the HslU/HslV complex is dependent on binding of ATP.

It is found in the cytoplasm. ATPase subunit of a proteasome-like degradation complex; this subunit has chaperone activity. The binding of ATP and its subsequent hydrolysis by HslU are essential for unfolding of protein substrates subsequently hydrolyzed by HslV. HslU recognizes the N-terminal part of its protein substrates and unfolds these before they are guided to HslV for hydrolysis. The chain is ATP-dependent protease ATPase subunit HslU from Acidovorax ebreus (strain TPSY) (Diaphorobacter sp. (strain TPSY)).